Here is a 753-residue protein sequence, read N- to C-terminus: Striatin-4 (753 aa).

A disordered region spans residues 10–65 (VAAAASSCRPLGSGAGPGPTGAAPVSAPAPGPGPAGKGGGGGGSPGPTAGPEPLSL). A compositionally biased stretch (gly residues) spans 43-54 (PAGKGGGGGGSP). A Phosphoserine modification is found at Ser-53. Residues 69-136 (LHFIQHEWAR…QERAKYHKLK (68 aa)) adopt a coiled-coil conformation. The segment at 71-79 (FIQHEWARF) is caveolin-binding. Residues 165–182 (ENSPLVWKEGRQLLRQYL) are calmodulin-binding. Ser-206 bears the Phosphoserine mark. 3 disordered regions span residues 213 to 232 (VEPS…LSGG), 271 to 345 (CEDE…SPHE), and 363 to 382 (VDGL…QPRP). Composition is skewed to acidic residues over residues 271–283 (CEDE…DELD) and 302–317 (EMED…DAIN). Ser-276 is modified (phosphoserine). The segment covering 332–345 (PDPRRCTVDGSPHE) has biased composition (basic and acidic residues). A compositionally biased stretch (pro residues) spans 370–380 (VTGPPPGTPQP). WD repeat units follow at residues 436-475 (SHYD…TAKK), 489-528 (AHRG…MDPY), 542-581 (GHGD…PACL), 587-628 (ASEH…ALLT), 635-674 (SGPT…PVHS), 677-716 (AHLD…CVQE), and 723-753 (KHEE…KVFV).

Belongs to the WD repeat striatin family. Part of the core of STRIPAK complexes composed of PP2A catalytic and scaffolding subunits, the striatins (PP2A regulatory subunits), the striatin-associated proteins MOB4, STRIP1 and STRIP2, PDCD10 and members of the STE20 kinases, such as STK24 and STK26. Interacts with CTTNBP2NL.

It is found in the cytoplasm. Functionally, calmodulin-binding scaffolding protein which is the center of the striatin-interacting phosphatase and kinase (STRIPAK) complexes. STRIPAK complexes have critical roles in protein (de)phosphorylation and are regulators of multiple signaling pathways including Hippo, MAPK, nuclear receptor and cytoskeleton remodeling. Different types of STRIPAK complexes are involved in a variety of biological processes such as cell growth, differentiation, apoptosis, metabolism and immune regulation. Key regulator of the expanded Hippo signaling pathway by interacting and allowing the inhibition of MAP4K kinases by the STRIPAK complex. This is Striatin-4 from Homo sapiens (Human).